A 136-amino-acid chain; its full sequence is Large ribosomal subunit protein uL16 (136 aa).

The protein belongs to the universal ribosomal protein uL16 family. In terms of assembly, part of the 50S ribosomal subunit.

In terms of biological role, binds 23S rRNA and is also seen to make contacts with the A and possibly P site tRNAs. This Haemophilus influenzae (strain 86-028NP) protein is Large ribosomal subunit protein uL16.